A 396-amino-acid polypeptide reads, in one-letter code: Proton-coupled antiporter flippase LtaA (396 aa).

12 consecutive transmembrane segments (helical) span residues 15–34 (FILM…MYIL), 46–73 (IAVA…GFLL), 80–99 (IVLT…VIWF), 105–126 (VIIF…IMLS), 138–159 (GYVY…NLLI), 165–184 (RFAF…YYFV), 211–231 (LLLF…VPIL), 243–264 (TIEY…MLFL), 276–298 (MYGV…SMIV), 304–326 (WIIA…TFMA), 338–358 (WGVF…FGGL), and 370–390 (FYFS…YFIA).

The protein belongs to the major facilitator superfamily. LtaA family.

Its subcellular location is the cell membrane. The protein operates within cell wall biogenesis; lipoteichoic acid biosynthesis. Its function is as follows. Proton-coupled antiporter flippase that catalyzes the translocation, from the inner to the outer leaflet of the cell membrane, of the lipid-linked disaccharide (anchor-LLD) that anchors lipoteichoic acids (LTA) to the cell membrane. The sequence is that of Proton-coupled antiporter flippase LtaA (ltaA) from Staphylococcus aureus (strain MRSA252).